The following is a 203-amino-acid chain: Twist-related protein 1 (203 aa).

Residues 1–18 show a composition bias toward low complexity; it reads MMQDVSSSPVSPADDSLS. The segment at 1–106 is disordered; sequence MMQDVSSSPV…GGGSPQSYEE (106 aa). A compositionally biased stretch (basic residues) spans 34–43; it reads RGGRKRRSSS. Composition is skewed to gly residues over residues 47-66 and 81-100; these read AGGGAGPGGAASGGVGGGDE and GCGGGGGGGAGGGSSSGGGS. Residues 109-160 enclose the bHLH domain; the sequence is TQRVMANVRERQRTQSLNEAFAALRKIIPTLPSDKLSKIQTLKLAARYIDFL. The interval 162 to 192 is sufficient for transactivation activity; that stretch reads QVLQSDELDSKMASCSYVAHERLSYAFSVWR.

As to quaternary structure, efficient DNA binding requires dimerization with another bHLH protein. Homodimer or heterodimer with E proteins such as TCF3. ID1 binds preferentially to TCF3 but does not interact efficiently with TWIST1 so ID1 levels control the amount of TCF3 available to dimerize with TWIST and thus determine the type of dimer formed.

The protein localises to the nucleus. In terms of biological role, acts as a transcriptional regulator. Inhibits myogenesis by sequestrating E proteins, inhibiting trans-activation by MEF2, and inhibiting DNA-binding by MYOD1 through physical interaction. This interaction probably involves the basic domains of both proteins. Also represses expression of pro-inflammatory cytokines such as TNFA and IL1B. Regulates cranial suture patterning and fusion. Activates transcription as a heterodimer with E proteins. Regulates gene expression differentially, depending on dimer composition. Homodimers induce expression of FGFR2 and POSTN while heterodimers repress FGFR2 and POSTN expression and induce THBS1 expression. Heterodimerization is also required for osteoblast differentiation. Represses the activity of the circadian transcriptional activator: NPAS2-BMAL1 heterodimer. In Pongo pygmaeus (Bornean orangutan), this protein is Twist-related protein 1 (TWIST1).